The sequence spans 549 residues: O-fucosyltransferase 29 (549 aa).

The helical; Signal-anchor for type II membrane protein transmembrane segment at 43–63 threads the bilayer; it reads TVMWTWVCGFMLFSLGVISLF. Asparagine 152 carries an N-linked (GlcNAc...) asparagine glycan. Residue 292–294 coordinates substrate; sequence HLR. N-linked (GlcNAc...) asparagine glycosylation is found at asparagine 359 and asparagine 527. The interval 506 to 549 is disordered; the sequence is PFSYDKTSTDDEEEDMSEENHNSTSPGHVHLSSADNERDEVFPD. The span at 540–549 shows a compositional bias: basic and acidic residues; sequence DNERDEVFPD.

It belongs to the glycosyltransferase GT106 family.

It localises to the membrane. It participates in glycan metabolism. This is O-fucosyltransferase 29 from Arabidopsis thaliana (Mouse-ear cress).